The primary structure comprises 315 residues: Putative 2-hydroxyacid dehydrogenase HI_1556 (315 aa).

Residues threonine 73, 156-157 (CL), 231-233 (TGR), and aspartate 257 each bind NAD(+). Residue arginine 233 is part of the active site. Glutamate 262 is an active-site residue. Residue histidine 285 is the Proton donor of the active site. 285–288 (HIAW) contributes to the NAD(+) binding site.

It belongs to the D-isomer specific 2-hydroxyacid dehydrogenase family.

The sequence is that of Putative 2-hydroxyacid dehydrogenase HI_1556 from Haemophilus influenzae (strain ATCC 51907 / DSM 11121 / KW20 / Rd).